Consider the following 196-residue polypeptide: MNTFATLAIFISACLAVGSCGGYGSPIGYGGPINVGLRRVSSIGQQSGDGAAAASAAASGGDNGPVEIIAGGAPRYGSSQNLRPILLNSGYHGGLNDNIGRIAQIVGGGRSLGGHLGGHLGGHLGGRIGGNYGGRYIRPRFTVQPAGATLLYPGQNSYRRISSPVEYSKVILPVRAAAPVAKLYIPQNNYGSQVGY.

An N-terminal signal peptide occupies residues 1-16; sequence MNTFATLAIFISACLA.

It belongs to the chorion protein S19 family.

It is found in the secreted. Chorion membrane (egg shell) protein; plays a role in protecting the egg from the environment. The chain is Chorion protein S19 (Cp19) from Drosophila grimshawi (Hawaiian fruit fly).